The primary structure comprises 151 residues: 3-hydroxyacyl-[acyl-carrier-protein] dehydratase FabZ (151 aa).

The active site involves H57.

This sequence belongs to the thioester dehydratase family. FabZ subfamily.

The protein resides in the cytoplasm. It carries out the reaction a (3R)-hydroxyacyl-[ACP] = a (2E)-enoyl-[ACP] + H2O. Functionally, involved in unsaturated fatty acids biosynthesis. Catalyzes the dehydration of short chain beta-hydroxyacyl-ACPs and long chain saturated and unsaturated beta-hydroxyacyl-ACPs. The sequence is that of 3-hydroxyacyl-[acyl-carrier-protein] dehydratase FabZ from Prochlorococcus marinus (strain SARG / CCMP1375 / SS120).